Here is a 291-residue protein sequence, read N- to C-terminus: Serine/threonine-protein phosphatase Pgam5, mitochondrial (291 aa).

Residues 7–23 form a helical membrane-spanning segment; that stretch reads FACGTGAGLAAFYLQRL. A disordered region spans residues 59–78; it reads KSLVRPQKNEQPQEQNRYNS. A compositionally biased stretch (polar residues) spans 67 to 77; it reads NEQPQEQNRYN.

Belongs to the phosphoglycerate mutase family. BPG-dependent PGAM subfamily. As to quaternary structure, interacts with Pk92B/ASK1.

The protein localises to the mitochondrion outer membrane. It carries out the reaction O-phospho-L-seryl-[protein] + H2O = L-seryl-[protein] + phosphate. It catalyses the reaction O-phospho-L-threonyl-[protein] + H2O = L-threonyl-[protein] + phosphate. Displays phosphatase activity for serine/threonine residues, and dephosphorylates and activates Pk92B kinase. Has apparently no phosphoglycerate mutase activity. This chain is Serine/threonine-protein phosphatase Pgam5, mitochondrial, found in Drosophila willistoni (Fruit fly).